We begin with the raw amino-acid sequence, 229 residues long: C-&gt;U-editing enzyme APOBEC-1 (229 aa).

In terms of domain architecture, CMP/dCMP-type deaminase spans 10–134 (VDPTLRRRIE…PRNRQGLRDL (125 aa)). H61 contributes to the Zn(2+) binding site. E63 acts as the Proton donor in catalysis. Residues C93 and C96 each contribute to the Zn(2+) site.

The protein belongs to the cytidine and deoxycytidylate deaminase family. In terms of assembly, homodimer. Interacts with A1CF; form an mRNA editing complex. Interacts with RBM47; form an mRNA editing complex. Found in a complex with CELF2/CUGBP2 and A1CF. Interacts with HNRPAB. Interacts with SYNCRIP. Zn(2+) is required as a cofactor. Expressed in the liver as well as small intestine.

Its subcellular location is the cytoplasm. It is found in the nucleus. It catalyses the reaction a cytidine in mRNA + H2O + H(+) = a uridine in mRNA + NH4(+). It carries out the reaction cytidine(6666) in apoB mRNA + H2O + H(+) = uridine(6666) in apoB mRNA + NH4(+). In terms of biological role, cytidine deaminase catalyzing the cytidine to uridine postranscriptional editing of a variety of mRNAs. Form complexes with cofactors that confer differential editing activity and selectivity. Responsible for the postranscriptional editing of a CAA codon for Gln to a UAA codon for stop in the apolipoprotein B mRNA. Also involved in CGA (Arg) to UGA (Stop) editing in the NF1 mRNA. May also play a role in the epigenetic regulation of gene expression by participating in DNA demethylation. This chain is C-&gt;U-editing enzyme APOBEC-1, found in Rattus norvegicus (Rat).